The following is a 359-amino-acid chain: Type-1 angiotensin II receptor (359 aa).

Topologically, residues 1 to 25 (MVPNYSTEETVKRIHVDCPVSGRHS) are extracellular. A glycan (N-linked (GlcNAc...) asparagine) is linked at Asn-4. An angiotensin II-binding site is contributed by Asp-17. 2 cysteine pairs are disulfide-bonded: Cys-18–Cys-274 and Cys-101–Cys-180. A helical transmembrane segment spans residues 26 to 55 (YIYIMVPTVYSIIFIIGIFGNSLVVIVIYC). Residues 56–61 (YMKLKT) are Cytoplasmic-facing. Residues 62–89 (VASIFLLNLALADLCFLITLPLWAAYTA) traverse the membrane as a helical segment. Residues 90 to 98 (MEYQWPFGN) are Extracellular-facing. A helical membrane pass occupies residues 99–125 (CLCKLASAGISFNLYASVFLLTCLSID). Topologically, residues 126–141 (RYLAIVHPVKSRIRRT) are cytoplasmic. The helical transmembrane segment at 142 to 165 (MFVARVTCIVIWLLAGVASLPVII) threads the bilayer. Residues 166–190 (HRNIFFAENLNMTVCGFRYDNNNTT) lie on the Extracellular side of the membrane. Arg-167 contacts angiotensin II. Asn-176 is a glycosylation site (N-linked (GlcNAc...) asparagine). Positions 182 and 184 each coordinate angiotensin II. N-linked (GlcNAc...) asparagine glycosylation is found at Asn-187 and Asn-188. Residues 191–216 (LRVGLGLSKNLLGFLIPFLIILTSYT) traverse the membrane as a helical segment. Position 199 (Lys-199) interacts with angiotensin II. Over 217–239 (LIWKTLKKAYQIQRNKTRNDDIF) the chain is Cytoplasmic. A helical transmembrane segment spans residues 240-268 (KMIVAIVFFFFFSWIPHQVFTFLDVLIQL). At 269–278 (HVITDCKITD) the chain is on the extracellular side. The chain crosses the membrane as a helical span at residues 279–304 (IVDTAMPFTICIAYFNNCLNPFFYVF). The Cytoplasmic portion of the chain corresponds to 305-359 (FGKNFKKYFLQLIKYIPPNVSTHPSLTTKMSSLSYRPPENIRLPTKKTAGSFDTE).

It belongs to the G-protein coupled receptor 1 family. In terms of processing, C-terminal Ser or Thr residues may be phosphorylated. Adrenal medulla.

It localises to the cell membrane. Its function is as follows. Receptor for angiotensin II, a vasoconstricting peptide, which acts as a key regulator of blood pressure and sodium retention by the kidney. The activated receptor in turn couples to G-alpha proteins G(q) (GNAQ, GNA11, GNA14 or GNA15) and thus activates phospholipase C and increases the cytosolic Ca(2+) concentrations, which in turn triggers cellular responses such as stimulation of protein kinase C. The polypeptide is Type-1 angiotensin II receptor (AGTR1) (Meleagris gallopavo (Wild turkey)).